The following is a 155-amino-acid chain: SsrA-binding protein (155 aa).

It belongs to the SmpB family.

Its subcellular location is the cytoplasm. In terms of biological role, required for rescue of stalled ribosomes mediated by trans-translation. Binds to transfer-messenger RNA (tmRNA), required for stable association of tmRNA with ribosomes. tmRNA and SmpB together mimic tRNA shape, replacing the anticodon stem-loop with SmpB. tmRNA is encoded by the ssrA gene; the 2 termini fold to resemble tRNA(Ala) and it encodes a 'tag peptide', a short internal open reading frame. During trans-translation Ala-aminoacylated tmRNA acts like a tRNA, entering the A-site of stalled ribosomes, displacing the stalled mRNA. The ribosome then switches to translate the ORF on the tmRNA; the nascent peptide is terminated with the 'tag peptide' encoded by the tmRNA and targeted for degradation. The ribosome is freed to recommence translation, which seems to be the essential function of trans-translation. The polypeptide is SsrA-binding protein (Bacillus mycoides (strain KBAB4) (Bacillus weihenstephanensis)).